We begin with the raw amino-acid sequence, 234 residues long: Endonuclease NucS (234 aa).

This sequence belongs to the NucS endonuclease family.

Its subcellular location is the cytoplasm. Functionally, cleaves both 3' and 5' ssDNA extremities of branched DNA structures. The chain is Endonuclease NucS from Bifidobacterium animalis subsp. lactis (strain AD011).